A 358-amino-acid polypeptide reads, in one-letter code: Phosphate acyltransferase (358 aa).

The disordered stretch occupies residues 336-358 (SAAGAAPASPETAPTPHPSTRAA).

This sequence belongs to the PlsX family. In terms of assembly, homodimer. Probably interacts with PlsY.

The protein resides in the cytoplasm. It catalyses the reaction a fatty acyl-[ACP] + phosphate = an acyl phosphate + holo-[ACP]. It functions in the pathway lipid metabolism; phospholipid metabolism. Functionally, catalyzes the reversible formation of acyl-phosphate (acyl-PO(4)) from acyl-[acyl-carrier-protein] (acyl-ACP). This enzyme utilizes acyl-ACP as fatty acyl donor, but not acyl-CoA. In Cupriavidus pinatubonensis (strain JMP 134 / LMG 1197) (Cupriavidus necator (strain JMP 134)), this protein is Phosphate acyltransferase.